The following is a 246-amino-acid chain: Acetoacetate decarboxylase (246 aa).

Lys115 acts as the Schiff-base intermediate with acetoacetate in catalysis.

It belongs to the ADC family.

It catalyses the reaction acetoacetate + H(+) = acetone + CO2. Functionally, catalyzes the conversion of acetoacetate to acetone and carbon dioxide. The protein is Acetoacetate decarboxylase of Clostridium beijerinckii (strain ATCC 51743 / NCIMB 8052) (Clostridium acetobutylicum).